A 346-amino-acid polypeptide reads, in one-letter code: Holliday junction branch migration complex subunit RuvB (346 aa).

A large ATPase domain (RuvB-L) region spans residues 1 to 182 (MSERLVTSNE…LGVLCSMEYY (182 aa)). Residues leucine 21, arginine 22, glycine 63, lysine 66, threonine 67, threonine 68, 129–131 (EDY), arginine 172, tyrosine 182, and arginine 219 each bind ATP. Position 67 (threonine 67) interacts with Mg(2+). A small ATPAse domain (RuvB-S) region spans residues 183–253 (TDEQLKEIII…AAKKSLEILE (71 aa)). The head domain (RuvB-H) stretch occupies residues 256-346 (GEGFDRIDNK…DSKQCTLFEK (91 aa)). Residues arginine 311 and arginine 316 each coordinate DNA.

The protein belongs to the RuvB family. As to quaternary structure, homohexamer. Forms an RuvA(8)-RuvB(12)-Holliday junction (HJ) complex. HJ DNA is sandwiched between 2 RuvA tetramers; dsDNA enters through RuvA and exits via RuvB. An RuvB hexamer assembles on each DNA strand where it exits the tetramer. Each RuvB hexamer is contacted by two RuvA subunits (via domain III) on 2 adjacent RuvB subunits; this complex drives branch migration. In the full resolvosome a probable DNA-RuvA(4)-RuvB(12)-RuvC(2) complex forms which resolves the HJ.

The protein localises to the cytoplasm. The enzyme catalyses ATP + H2O = ADP + phosphate + H(+). Its function is as follows. The RuvA-RuvB-RuvC complex processes Holliday junction (HJ) DNA during genetic recombination and DNA repair, while the RuvA-RuvB complex plays an important role in the rescue of blocked DNA replication forks via replication fork reversal (RFR). RuvA specifically binds to HJ cruciform DNA, conferring on it an open structure. The RuvB hexamer acts as an ATP-dependent pump, pulling dsDNA into and through the RuvAB complex. RuvB forms 2 homohexamers on either side of HJ DNA bound by 1 or 2 RuvA tetramers; 4 subunits per hexamer contact DNA at a time. Coordinated motions by a converter formed by DNA-disengaged RuvB subunits stimulates ATP hydrolysis and nucleotide exchange. Immobilization of the converter enables RuvB to convert the ATP-contained energy into a lever motion, pulling 2 nucleotides of DNA out of the RuvA tetramer per ATP hydrolyzed, thus driving DNA branch migration. The RuvB motors rotate together with the DNA substrate, which together with the progressing nucleotide cycle form the mechanistic basis for DNA recombination by continuous HJ branch migration. Branch migration allows RuvC to scan DNA until it finds its consensus sequence, where it cleaves and resolves cruciform DNA. This chain is Holliday junction branch migration complex subunit RuvB, found in Clostridium perfringens (strain 13 / Type A).